Here is a 307-residue protein sequence, read N- to C-terminus: Aspartate carbamoyltransferase catalytic subunit (307 aa).

2 residues coordinate carbamoyl phosphate: arginine 51 and threonine 52. Lysine 80 serves as a coordination point for L-aspartate. The carbamoyl phosphate site is built by arginine 101, histidine 129, and glutamine 132. Arginine 162 and arginine 225 together coordinate L-aspartate. Residues leucine 264 and proline 265 each coordinate carbamoyl phosphate.

Belongs to the aspartate/ornithine carbamoyltransferase superfamily. ATCase family. Heterododecamer (2C3:3R2) of six catalytic PyrB chains organized as two trimers (C3), and six regulatory PyrI chains organized as three dimers (R2).

It carries out the reaction carbamoyl phosphate + L-aspartate = N-carbamoyl-L-aspartate + phosphate + H(+). It participates in pyrimidine metabolism; UMP biosynthesis via de novo pathway; (S)-dihydroorotate from bicarbonate: step 2/3. Its function is as follows. Catalyzes the condensation of carbamoyl phosphate and aspartate to form carbamoyl aspartate and inorganic phosphate, the committed step in the de novo pyrimidine nucleotide biosynthesis pathway. The chain is Aspartate carbamoyltransferase catalytic subunit from Lachnoclostridium phytofermentans (strain ATCC 700394 / DSM 18823 / ISDg) (Clostridium phytofermentans).